A 189-amino-acid chain; its full sequence is Glycerol-3-phosphate acyltransferase (189 aa).

5 consecutive transmembrane segments (helical) span residues 1 to 21 (MFWSLALLAYLLGSLSFAIVL), 50 to 70 (KLAILTLLGDLCKGMLPVLLA), 81 to 101 (AWVGICAVLGHLFPVYFRFQG), 111 to 131 (MLMALYFPAALLAIGAWVLTF), and 151 to 171 (LLAWREPEALLPMTVLTLMIV).

It belongs to the PlsY family. Probably interacts with PlsX.

The protein localises to the cell inner membrane. The enzyme catalyses an acyl phosphate + sn-glycerol 3-phosphate = a 1-acyl-sn-glycero-3-phosphate + phosphate. The protein operates within lipid metabolism; phospholipid metabolism. Catalyzes the transfer of an acyl group from acyl-phosphate (acyl-PO(4)) to glycerol-3-phosphate (G3P) to form lysophosphatidic acid (LPA). This enzyme utilizes acyl-phosphate as fatty acyl donor, but not acyl-CoA or acyl-ACP. This is Glycerol-3-phosphate acyltransferase from Pseudomonas entomophila (strain L48).